The chain runs to 425 residues: tRNA(Ile)-lysidine synthase (425 aa).

Residue 27–32 (SGGLDS) coordinates ATP.

The protein belongs to the tRNA(Ile)-lysidine synthase family.

The protein resides in the cytoplasm. It catalyses the reaction cytidine(34) in tRNA(Ile2) + L-lysine + ATP = lysidine(34) in tRNA(Ile2) + AMP + diphosphate + H(+). Functionally, ligates lysine onto the cytidine present at position 34 of the AUA codon-specific tRNA(Ile) that contains the anticodon CAU, in an ATP-dependent manner. Cytidine is converted to lysidine, thus changing the amino acid specificity of the tRNA from methionine to isoleucine. The protein is tRNA(Ile)-lysidine synthase of Streptococcus pneumoniae serotype 19F (strain G54).